The sequence spans 478 residues: Elongation factor Tu, chloroplastic (478 aa).

The span at 1–29 shows a compositional bias: low complexity; the sequence is MASISAATATSSTKLVSSNSTNPLLPSST. Positions 1–31 are disordered; that stretch reads MASISAATATSSTKLVSSNSTNPLLPSSTKP. The N-terminal 69 residues, 1-69, are a transit peptide targeting the chloroplast; it reads MASISAATAT…THRHRRFTVR (69 aa). The region spanning 79–283 is the tr-type G domain; it reads KPHVNIGTIG…AVDSYIPIPV (205 aa). The G1 stretch occupies residues 88 to 95; sequence GHVDHGKT. GTP is bound at residue 88-95; sequence GHVDHGKT. Residues 129-133 form a G2 region; it reads GITIN. Positions 150–153 are G3; that stretch reads DCPG. Residues 150–154 and 205–208 contribute to the GTP site; these read DCPGH and NKQD. Residues 205-208 are G4; that stretch reads NKQD. Residues 243–245 form a G5 region; that stretch reads SAL.

The protein belongs to the TRAFAC class translation factor GTPase superfamily. Classic translation factor GTPase family. EF-Tu/EF-1A subfamily.

Its subcellular location is the plastid. It localises to the chloroplast. Its function is as follows. This protein promotes the GTP-dependent binding of aminoacyl-tRNA to the A-site of ribosomes during protein biosynthesis. This Nicotiana tabacum (Common tobacco) protein is Elongation factor Tu, chloroplastic (TUFA).